The following is a 258-amino-acid chain: Aspartate/glutamate leucyltransferase (258 aa).

This sequence belongs to the R-transferase family. Bpt subfamily.

The protein localises to the cytoplasm. The enzyme catalyses N-terminal L-glutamyl-[protein] + L-leucyl-tRNA(Leu) = N-terminal L-leucyl-L-glutamyl-[protein] + tRNA(Leu) + H(+). The catalysed reaction is N-terminal L-aspartyl-[protein] + L-leucyl-tRNA(Leu) = N-terminal L-leucyl-L-aspartyl-[protein] + tRNA(Leu) + H(+). Its function is as follows. Functions in the N-end rule pathway of protein degradation where it conjugates Leu from its aminoacyl-tRNA to the N-termini of proteins containing an N-terminal aspartate or glutamate. In Bradyrhizobium sp. (strain BTAi1 / ATCC BAA-1182), this protein is Aspartate/glutamate leucyltransferase.